The sequence spans 234 residues: Phosphoglycolate phosphatase (234 aa).

The active-site Nucleophile is Asp-13. Residues Asp-13, Asp-15, and Asp-175 each contribute to the Mg(2+) site.

The protein belongs to the HAD-like hydrolase superfamily. CbbY/CbbZ/Gph/YieH family. In terms of assembly, monomer. Mg(2+) serves as cofactor. It depends on chloride as a cofactor.

The enzyme catalyses 2-phosphoglycolate + H2O = glycolate + phosphate. It participates in organic acid metabolism; glycolate biosynthesis; glycolate from 2-phosphoglycolate: step 1/1. In terms of biological role, specifically catalyzes the dephosphorylation of 2-phosphoglycolate. Is involved in the dissimilation of the intracellular 2-phosphoglycolate formed during the DNA repair of 3'-phosphoglycolate ends, a major class of DNA lesions induced by oxidative stress. This is Phosphoglycolate phosphatase from Pectobacterium atrosepticum (strain SCRI 1043 / ATCC BAA-672) (Erwinia carotovora subsp. atroseptica).